The following is a 262-amino-acid chain: uncharacterized protein (262 aa).

Residues 1–22 (MMNNSITLLLALLVGLVGFAFT) form the signal peptide.

The protein belongs to the IIV-6 117L family.

This is an uncharacterized protein from Aedes vexans (Inland floodwater mosquito).